Consider the following 349-residue polypeptide: MDNIETILRLAEEKILLVQSLKVLQEYKVEFLGKNGIVTNELKKLGSLSEQDRKEFGLKINKLKEEIQNIIKAKEEILEEEELNLKLSSDKIDLSLPARRYKQGSIHPITQCMEELIQVFAKFGFSIEDGPNIENDFHNFTALNFEDDHPARQMHDTFYLKGQENDKPMLLRTHTSTVQIRAMKNGKPPFRFIAPGRTYRSDSDMTHTPMFHQIEGLVIDKDINMGHLKYVITEFIRCFFENSNIELRFRPSFFPFTEPSAEVDIRMSKTDKWLEVLGCGMVHPNVLKNVGIDNSQYQGFAFGLGVERFAMLKYNIKDLRQFFEGDMRWLKHYSFSSFDIPNLAGGLTK.

Residue glutamate 258 participates in Mg(2+) binding.

This sequence belongs to the class-II aminoacyl-tRNA synthetase family. Phe-tRNA synthetase alpha subunit type 1 subfamily. Tetramer of two alpha and two beta subunits. The cofactor is Mg(2+).

Its subcellular location is the cytoplasm. It carries out the reaction tRNA(Phe) + L-phenylalanine + ATP = L-phenylalanyl-tRNA(Phe) + AMP + diphosphate + H(+). This chain is Phenylalanine--tRNA ligase alpha subunit, found in Rickettsia bellii (strain RML369-C).